We begin with the raw amino-acid sequence, 2161 residues long: DNA polymerase epsilon catalytic subunit A (2161 aa).

Short sequence motifs (nuclear localization signal) lie at residues asparagine 5 to aspartate 12, histidine 1137 to aspartate 1144, and leucine 1239 to valine 1246. Residues cysteine 2038, cysteine 2041, cysteine 2063, and cysteine 2068 each coordinate Zn(2+). A CysA-type zinc finger spans residues cysteine 2038–cysteine 2068. [4Fe-4S] cluster contacts are provided by cysteine 2099, cysteine 2102, cysteine 2114, and cysteine 2116. Residues cysteine 2099–cysteine 2116 carry the CysB motif motif. Positions serine 2130–methionine 2137 match the Nuclear localization signal 4 motif.

It belongs to the DNA polymerase type-B family. In terms of assembly, heterotetramer. Subunit of the DNA polymerase II. Interacts (via C-terminus) with DPB2. Interacts with LHP1/TFL2. Requires [4Fe-4S] cluster as cofactor. As to expression, mostly expressed at low levels in inflorescence (floral meristem and flowers until anthesis), and, to a lower extent, in roots, seeds and leaves.

The protein localises to the nucleus. It carries out the reaction DNA(n) + a 2'-deoxyribonucleoside 5'-triphosphate = DNA(n+1) + diphosphate. Its function is as follows. DNA polymerase II, which participates in chromosomal DNA replication. Required for the timing and determination of cell fate during plant embryogenesis and root pole development, by promoting cell cycle and cell type patterning. Necessary for proper shoot (SAM) and root apical meristem (RAM) functions. Involved in maintaining epigenetic states, controlling hypersensitive response (HR), and mediating abscisic acid (ABA) signaling. Required for flowering repression through a mechanism involving epigenetic gene silencing. May participate in processes involved in chromatin-mediated cellular memory. This chain is DNA polymerase epsilon catalytic subunit A (POL2A), found in Arabidopsis thaliana (Mouse-ear cress).